Here is a 58-residue protein sequence, read N- to C-terminus: Small ribosomal subunit protein bS21 (58 aa).

Residues 24–58 (TKAGTLQEARKREHYEKPSVKRKRKSEAARKRKKI) form a disordered region. The segment covering 31 to 42 (EARKREHYEKPS) has biased composition (basic and acidic residues). Positions 43–58 (VKRKRKSEAARKRKKI) are enriched in basic residues.

This sequence belongs to the bacterial ribosomal protein bS21 family.

The chain is Small ribosomal subunit protein bS21 from Streptococcus thermophilus (strain CNRZ 1066).